A 437-amino-acid polypeptide reads, in one-letter code: Elongation factor 1-alpha (437 aa).

In terms of domain architecture, tr-type G spans 4-229; sequence KPHMNLVVIG…DQLQPPAKPV (226 aa). The interval 13 to 20 is G1; sequence GHVDHGKS. 13-20 contributes to the GTP binding site; the sequence is GHVDHGKS. S20 lines the Mg(2+) pocket. The segment at 69 to 73 is G2; that stretch reads GITID. The tract at residues 90–93 is G3; the sequence is DAPG. GTP is bound by residues 90-94 and 152-155; these read DAPGH and NKMD. A G4 region spans residues 152 to 155; the sequence is NKMD. Residues 193–195 form a G5 region; it reads SAW.

Belongs to the TRAFAC class translation factor GTPase superfamily. Classic translation factor GTPase family. EF-Tu/EF-1A subfamily.

Its subcellular location is the cytoplasm. The catalysed reaction is GTP + H2O = GDP + phosphate + H(+). Functionally, GTP hydrolase that promotes the GTP-dependent binding of aminoacyl-tRNA to the A-site of ribosomes during protein biosynthesis. This Aeropyrum pernix (strain ATCC 700893 / DSM 11879 / JCM 9820 / NBRC 100138 / K1) protein is Elongation factor 1-alpha.